A 1923-amino-acid polypeptide reads, in one-letter code: Callose synthase 5 (1923 aa).

Residues 1–10 show a composition bias toward polar residues; sequence MAQSSTSHDS. The segment at 1–22 is disordered; sequence MAQSSTSHDSGPQGLMRRPSRS. The Cytoplasmic portion of the chain corresponds to 1 to 481; the sequence is MAQSSTSHDS…ETRTFWHIYH (481 aa). A helical membrane pass occupies residues 482–502; it reads SFDRLWTFYLLALQAMIILAF. Residues 503–521 lie on the Extracellular side of the membrane; sequence ERVELREILRKDVLYALSS. The chain crosses the membrane as a helical span at residues 522–542; sequence IFITAAFLRFLQSVLDVILNF. Topologically, residues 543–559 are cytoplasmic; it reads PGFHRWKFTDVLRNILK. The helical transmembrane segment at 560-580 threads the bilayer; it reads IVVSLAWCVVLPLCYAQSVSF. Topologically, residues 581–601 are extracellular; it reads APGKLKQWLSFLPQVKGVPPL. A helical membrane pass occupies residues 602-622; the sequence is YIMAVALYLLPNVLAAIMFIF. The Cytoplasmic portion of the chain corresponds to 623–658; it reads PMLRRWIENSDWHIFRLLLWWSQPRIYVGRGMHESQ. The chain crosses the membrane as a helical span at residues 659-679; sequence IALIKYTIFWLLLFCCKFAFS. The Extracellular portion of the chain corresponds to 680 to 719; that stretch reads YFLQVKLLVKPTNAIMSIRHVKYKWHEFFPNAEHNYGAVV. Residues 720-740 form a helical membrane-spanning segment; that stretch reads SLWLPVILVYFMDTQIWYAIF. Over 741–1486 the chain is Cytoplasmic; that stretch reads STICGGVIGA…FDFFRMMSCY (746 aa). Residues 1487–1507 traverse the membrane as a helical segment; sequence FTTVGFYISSMIVVLTVYAFL. The Extracellular segment spans residues 1508 to 1535; sequence YGRLYLSLSGVEEAIVKFAAAKGDSSLK. A helical transmembrane segment spans residues 1536–1556; that stretch reads AAMASQSVVQLGLLMTLPMVM. At 1557 to 1566 the chain is on the cytoplasmic side; it reads EIGLERGFRT. A helical transmembrane segment spans residues 1567-1587; the sequence is ALSDLIIMQLQLAPVFFTFSL. Over 1588–1630 the chain is Extracellular; the sequence is GTKVHYYGRTILHGGSKYRATGRGFVVKHEKFAENYRMYSRSH. A helical transmembrane segment spans residues 1631–1651; that stretch reads FVKGMELMVLLICYRIYGKAA. Residues 1652–1657 are Cytoplasmic-facing; that stretch reads EDSVGY. The chain crosses the membrane as a helical span at residues 1658-1678; that stretch reads ALVMGSTWFLVGSWLFAPFFF. Residues 1679 to 1732 lie on the Extracellular side of the membrane; the sequence is NPSGFEWQKIVDDWDDWNKWISSRGGIGVPANKSWESWWEEEQEHLLHSGFFGK. Residue Asn1710 is glycosylated (N-linked (GlcNAc...) asparagine). A helical transmembrane segment spans residues 1733-1755; sequence FWEIFLSLRYFIYQYGIVYQLNL. Topologically, residues 1756–1766 are cytoplasmic; that stretch reads TKESRMGKQHS. A helical membrane pass occupies residues 1767-1787; that stretch reads IIVYGLSWLVIVAVMIVLKIV. Over 1788–1803 the chain is Extracellular; that stretch reads SMGRKKFSADFQLMFR. A helical transmembrane segment spans residues 1804-1824; the sequence is LLKLFLFIGSVVIVGMLFHFL. Residue Lys1825 is a topological domain, cytoplasmic. Residues 1826–1846 traverse the membrane as a helical segment; that stretch reads LTVGDIMQSLLAFLPTGWALL. Over 1847–1873 the chain is Extracellular; the sequence is QISQVARPLMKTVGMWGSVKALARGYE. The chain crosses the membrane as a helical span at residues 1874–1894; sequence YIMGVVIFMPVTVLAWFPFVS. At 1895-1923 the chain is on the cytoplasmic side; that stretch reads EFQTRLLFNQAFSRGLQIQRILAGGKKQK.

Belongs to the glycosyltransferase 48 family.

The protein resides in the cell membrane. The enzyme catalyses [(1-&gt;3)-beta-D-glucosyl](n) + UDP-alpha-D-glucose = [(1-&gt;3)-beta-D-glucosyl](n+1) + UDP + H(+). Its function is as follows. Required for the formation of the callose wall separating the tetraspores (interstitial wall) and surrounding the pollen mother cells (peripheral wall). Required for exine formation on pollen wall. May be involved in callose synthesis during pollen tube growth. During plant growth and development, callose is found as a transitory component of the cell plate in dividing cells, is a major component of pollen mother cell walls and pollen tubes, and is found as a structural component of plasmodesmatal canals. In Arabidopsis thaliana (Mouse-ear cress), this protein is Callose synthase 5 (CALS5).